The primary structure comprises 393 residues: MNLSATEKDLMIVNMGPHHPSMHGVLRLIVTLDGEDVVDCEPILGYLHRGMEKIAENRTIIQYLPYVTRWDYLATMFTEAITVNGPEQLGNIQVPKRASYIRVIMLELSRIASHLLWLGPFMADIGAQTPFFYIFRERELVYDLFEAATGMRMMHNYFRIGGVAADLPYGWLDKCLDFCDYFLTGIVEYQKLITRNPIFLERVEGIGVIGGEEAINWGLSGPMLRASGIKWDLRKVDHYECYDEFDWEIQWQKEGDSLARYLVRISEMTESIKIIQQALEGIPGGPYENLEIRCFDRERDPEWNDFEYRFISIKPSPTFELPRQELYARMEAPKGELGIFLIGDQSGFPWRWKIRPPGFINLQILPQLVKRMKLADIMTILGSIDIIMGEVDR.

This sequence belongs to the complex I 49 kDa subunit family. NDH is composed of at least 16 different subunits, 5 of which are encoded in the nucleus.

Its subcellular location is the plastid. The protein resides in the chloroplast thylakoid membrane. The catalysed reaction is a plastoquinone + NADH + (n+1) H(+)(in) = a plastoquinol + NAD(+) + n H(+)(out). It catalyses the reaction a plastoquinone + NADPH + (n+1) H(+)(in) = a plastoquinol + NADP(+) + n H(+)(out). Its function is as follows. NDH shuttles electrons from NAD(P)H:plastoquinone, via FMN and iron-sulfur (Fe-S) centers, to quinones in the photosynthetic chain and possibly in a chloroplast respiratory chain. The immediate electron acceptor for the enzyme in this species is believed to be plastoquinone. Couples the redox reaction to proton translocation, and thus conserves the redox energy in a proton gradient. This is NAD(P)H-quinone oxidoreductase subunit H, chloroplastic from Gossypium barbadense (Sea Island cotton).